The chain runs to 522 residues: Maturase K (522 aa).

It belongs to the intron maturase 2 family. MatK subfamily.

Its subcellular location is the plastid. The protein localises to the chloroplast. Usually encoded in the trnK tRNA gene intron. Probably assists in splicing its own and other chloroplast group II introns. In Iris orientalis (Yellowband iris), this protein is Maturase K.